A 1267-amino-acid polypeptide reads, in one-letter code: Probable cation-transporting ATPase catp-6 (1267 aa).

Topologically, residues Met-1–Arg-32 are extracellular. A helical transmembrane segment spans residues Thr-33–Trp-53. Residues Lys-54 to Pro-189 lie on the Cytoplasmic side of the membrane. Residues Ile-190–Val-210 form a helical membrane-spanning segment. Topologically, residues Thr-211 to Glu-217 are extracellular. The helical transmembrane segment at Tyr-218–Tyr-238 threads the bilayer. Topologically, residues Gln-239–Lys-390 are cytoplasmic. Residues Phe-391–Ile-411 traverse the membrane as a helical segment. The Extracellular portion of the chain corresponds to Met-412–Ser-424. A helical transmembrane segment spans residues Leu-425–Ile-445. Residues Asn-446–Met-950 lie on the Cytoplasmic side of the membrane. Asp-476 functions as the 4-aspartylphosphate intermediate in the catalytic mechanism. Mg(2+) contacts are provided by Asp-891 and Asp-895. The helical transmembrane segment at Ala-951 to Leu-971 threads the bilayer. The Extracellular segment spans residues Thr-972–Phe-976. A helical membrane pass occupies residues Met-977–Phe-997. Residues Tyr-998–Ala-1013 lie on the Cytoplasmic side of the membrane. A helical membrane pass occupies residues Ser-1014 to Phe-1034. Over Ser-1035–Ser-1058 the chain is Extracellular. A helical transmembrane segment spans residues Met-1059–Tyr-1079. Residues Ser-1080–Ala-1097 are Cytoplasmic-facing. The helical transmembrane segment at Leu-1098 to Leu-1118 threads the bilayer. Topologically, residues Lys-1119–Arg-1132 are extracellular. A helical transmembrane segment spans residues Ile-1133 to Phe-1153. Topologically, residues Val-1154–Tyr-1267 are cytoplasmic. Residues Glu-1232–Glu-1256 are disordered.

Belongs to the cation transport ATPase (P-type) (TC 3.A.3) family. Type V subfamily.

The protein resides in the membrane. The enzyme catalyses ATP + H2O = ADP + phosphate + H(+). This Caenorhabditis elegans protein is Probable cation-transporting ATPase catp-6.